Here is a 335-residue protein sequence, read N- to C-terminus: DNA polymerase beta (335 aa).

Lys-41 participates in a covalent cross-link: Glycyl lysine isopeptide (Lys-Gly) (interchain with G-Cter in ubiquitin). Residue Lys-60 coordinates K(+). Lys-60 contacts Na(+). A Glycyl lysine isopeptide (Lys-Gly) (interchain with G-Cter in ubiquitin) cross-link involves residue Lys-61. Residues Leu-62 and Val-65 each contribute to the K(+) site. The Na(+) site is built by Leu-62 and Val-65. Lys-72 acts as the Nucleophile; Schiff-base intermediate with DNA; for 5'-dRP lyase activity in catalysis. An N6-acetyllysine modification is found at Lys-72. Lys-81 is covalently cross-linked (Glycyl lysine isopeptide (Lys-Gly) (interchain with G-Cter in ubiquitin)). Residue Arg-83 is modified to Omega-N-methylarginine; by PRMT6. Thr-101, Val-103, and Ile-106 together coordinate K(+). Na(+)-binding residues include Thr-101, Val-103, and Ile-106. Residue Arg-149 participates in a 2'-deoxyribonucleoside 5'-triphosphate binding. Arg-152 is subject to Omega-N-methylarginine; by PRMT6. Ser-180, Arg-183, Gly-189, and Asp-190 together coordinate a 2'-deoxyribonucleoside 5'-triphosphate. Positions 183-192 are DNA-binding; that stretch reads RGAESSGDMD. 3 residues coordinate Mg(2+): Asp-190, Asp-192, and Asp-256.

The protein belongs to the DNA polymerase type-X family. In terms of assembly, monomer. Binds single-stranded DNA (ssDNA). Interacts with APEX1, LIG1, LIG3, FEN1, PCNA and XRCC1. Interacts with HUWE1/ARF-BP1, STUB1/CHIP and USP47. Interacts with FAM168A. The cofactor is Mg(2+). In terms of processing, methylation by PRMT6 stimulates the polymerase activity by enhancing DNA binding and processivity. Ubiquitinated at Lys-41, Lys-61 and Lys-81: monoubiquitinated by HUWE1/ARF-BP1. Monoubiquitinated protein is then the target of STUB1/CHIP, which catalyzes polyubiquitination from monoubiquitin, leading to degradation by the proteasome. USP47 mediates the deubiquitination of monoubiquitinated protein, preventing polyubiquitination by STUB1/CHIP and its subsequent degradation.

The protein localises to the nucleus. The protein resides in the cytoplasm. It carries out the reaction DNA(n) + a 2'-deoxyribonucleoside 5'-triphosphate = DNA(n+1) + diphosphate. The enzyme catalyses a 5'-end 2'-deoxyribose-2'-deoxyribonucleotide-DNA = (2E,4S)-4-hydroxypenten-2-al-5-phosphate + a 5'-end 5'-phospho-2'-deoxyribonucleoside-DNA + H(+). The catalysed reaction is 2'-deoxyribonucleotide-(2'-deoxyribose 5'-phosphate)-2'-deoxyribonucleotide-DNA = a 3'-end 2'-deoxyribonucleotide-(2,3-dehydro-2,3-deoxyribose 5'-phosphate)-DNA + a 5'-end 5'-phospho-2'-deoxyribonucleoside-DNA + H(+). Functionally, repair polymerase that plays a key role in base-excision repair. During this process, the damaged base is excised by specific DNA glycosylases, the DNA backbone is nicked at the abasic site by an apurinic/apyrimidic (AP) endonuclease, and POLB removes 5'-deoxyribose-phosphate from the preincised AP site acting as a 5'-deoxyribose-phosphate lyase (5'-dRP lyase); through its DNA polymerase activity, it adds one nucleotide to the 3' end of the arising single-nucleotide gap. Conducts 'gap-filling' DNA synthesis in a stepwise distributive fashion rather than in a processive fashion as for other DNA polymerases. It is also able to cleave sugar-phosphate bonds 3' to an intact AP site, acting as an AP lyase. In Bos taurus (Bovine), this protein is DNA polymerase beta (POLB).